A 326-amino-acid chain; its full sequence is Transposase InsH for insertion sequence element IS5H (326 aa).

Belongs to the transposase 11 family.

Its function is as follows. Involved in the transposition of the insertion sequence IS5. This Escherichia coli (strain K12) protein is Transposase InsH for insertion sequence element IS5H (insH6).